Consider the following 65-residue polypeptide: Large ribosomal subunit protein bL35 (65 aa).

The disordered stretch occupies residues 1–52 (MPKMKSNRAAAKRFKRTANGGFKSGNSFTSHRFHGKTKKQRRQLRGLSMMDK). The span at 31 to 44 (HRFHGKTKKQRRQL) shows a compositional bias: basic residues.

This sequence belongs to the bacterial ribosomal protein bL35 family.

This Limosilactobacillus reuteri (strain DSM 20016) (Lactobacillus reuteri) protein is Large ribosomal subunit protein bL35.